A 204-amino-acid chain; its full sequence is Dual specificity protein phosphatase 18 (204 aa).

The region spanning 19 to 160 (GLSQITKSLF…LIHYEFQLFG (142 aa)) is the Tyrosine-protein phosphatase domain. The sufficient for mitochondrial localization stretch occupies residues 95–141 (MKQGRTLLHCAAGVSRSAALCLAYLMKYHVMSLLDAHAWTKSRRPII). Residue C104 is the Phosphocysteine intermediate of the active site.

The protein belongs to the protein-tyrosine phosphatase family. Non-receptor class dual specificity subfamily.

It localises to the cytoplasm. Its subcellular location is the nucleus. The protein localises to the mitochondrion inner membrane. It carries out the reaction O-phospho-L-tyrosyl-[protein] + H2O = L-tyrosyl-[protein] + phosphate. The catalysed reaction is O-phospho-L-seryl-[protein] + H2O = L-seryl-[protein] + phosphate. The enzyme catalyses O-phospho-L-threonyl-[protein] + H2O = L-threonyl-[protein] + phosphate. In terms of biological role, can dephosphorylate single and diphosphorylated synthetic MAPK peptides, with preference for the phosphotyrosine and diphosphorylated forms over phosphothreonine. In vitro, dephosphorylates p-nitrophenyl phosphate (pNPP). The polypeptide is Dual specificity protein phosphatase 18 (Dusp18) (Rattus norvegicus (Rat)).